A 145-amino-acid polypeptide reads, in one-letter code: Large ribosomal subunit protein uL16 (145 aa).

The protein belongs to the universal ribosomal protein uL16 family. As to quaternary structure, part of the 50S ribosomal subunit.

Its function is as follows. Binds 23S rRNA and is also seen to make contacts with the A and possibly P site tRNAs. The protein is Large ribosomal subunit protein uL16 of Lactobacillus gasseri (strain ATCC 33323 / DSM 20243 / BCRC 14619 / CIP 102991 / JCM 1131 / KCTC 3163 / NCIMB 11718 / NCTC 13722 / AM63).